We begin with the raw amino-acid sequence, 89 residues long: UPF0335 protein OCAR_5086/OCA5_c28780 (89 aa).

This sequence belongs to the UPF0335 family.

The chain is UPF0335 protein OCAR_5086/OCA5_c28780 from Afipia carboxidovorans (strain ATCC 49405 / DSM 1227 / KCTC 32145 / OM5) (Oligotropha carboxidovorans).